The chain runs to 212 residues: External core antigen (212 aa).

Positions Met-1 to Ala-19 are cleaved as a signal peptide. The HBEAG stretch occupies residues Gly-25–Leu-27. The segment at Asn-165–Cys-212 is disordered. The span at Val-178–Ser-205 shows a compositional bias: basic residues. The stretch at Ser-184 to Pro-190 is one 1; half-length repeat. The interval Ser-184–Gln-206 is 3 X 8 AA repeats of S-P-R-R-R-R-S-Q. Residues Ser-184–Cys-212 constitute a propeptide that is removed on maturation. Repeat copies occupy residues Ser-191–Gln-198 and Ser-199–Gln-206.

Belongs to the orthohepadnavirus precore antigen family. In terms of assembly, homodimerizes. Phosphorylated. Post-translationally, cleaved by host furin.

The protein localises to the secreted. It localises to the host nucleus. Functionally, may regulate immune response to the intracellular capsid in acting as a T-cell tolerogen, by having an immunoregulatory effect which prevents destruction of infected cells by cytotoxic T-cells. This immune regulation may predispose to chronicity during perinatal infections and prevent severe liver injury during adult infections. This is External core antigen from Homo sapiens (Human).